Consider the following 292-residue polypeptide: Outer membrane protein assembly factor BamD (292 aa).

Residues 1-26 form the signal peptide; sequence MIQRPTFFTPTHLLAMLLATFVLITG. A lipid anchor (N-palmitoyl cysteine) is attached at Cys-27. A lipid anchor (S-diacylglycerol cysteine) is attached at Cys-27.

It belongs to the BamD family. In terms of assembly, part of the Bam complex.

Its subcellular location is the cell outer membrane. Functionally, part of the outer membrane protein assembly complex, which is involved in assembly and insertion of beta-barrel proteins into the outer membrane. This Xylella fastidiosa (strain 9a5c) protein is Outer membrane protein assembly factor BamD.